We begin with the raw amino-acid sequence, 281 residues long: sn-glycerol-3-phosphate transport system permease protein UgpE (281 aa).

The next 6 helical transmembrane spans lie at 16–36 (LILG…AATL), 85–105 (FSIT…IVWF), 113–133 (FFWM…FPTV), 142–162 (LDSY…TFLF), 202–222 (ALFV…LLII), and 247–267 (WNSV…IVLV). The ABC transmembrane type-1 domain occupies 77 to 268 (LLNSFVMAFS…IPPVVIVLVM (192 aa)).

Belongs to the binding-protein-dependent transport system permease family. UgpAE subfamily. The complex is composed of two ATP-binding proteins (UgpC), two transmembrane proteins (UgpA and UgpE) and a solute-binding protein (UgpB).

It is found in the cell inner membrane. Part of the ABC transporter complex UgpBAEC involved in sn-glycerol-3-phosphate (G3P) import. Probably responsible for the translocation of the substrate across the membrane. Can also transport glycerophosphoryl diesters, which are hydrolyzed to G3P and alcohol during transport. The G3P moiety can be detected in the cytoplasm whereas the corresponding alcohol is usually found in the culture medium. It was proposed by Yang et al that the complex could also transport glycerol-2-phosphate (G2P) in vivo, but it was shown later by Wuttge et al that UgpB does not bind G2P, questioning this transport activity. G2P might be converted in the periplasm to G3P before its transport. This Escherichia coli (strain K12) protein is sn-glycerol-3-phosphate transport system permease protein UgpE.